The sequence spans 284 residues: Tropomyosin alpha-1 chain (284 aa).

The segment at 1-37 is disordered; it reads MDAIKKKMQMLKLDKENALDRAEQAETDKKAAEERSK. Positions 1–284 form a coiled coil; that stretch reads MDAIKKKMQM…DHALNDMTSI (284 aa). Residues 12 to 37 show a composition bias toward basic and acidic residues; that stretch reads KLDKENALDRAEQAETDKKAAEERSK.

This sequence belongs to the tropomyosin family. As to quaternary structure, homodimer. Heterodimer of an alpha (TPM1, TPM3 or TPM4) and a beta (TPM2) chain.

The protein localises to the cytoplasm. Its subcellular location is the cytoskeleton. Its function is as follows. Binds to actin filaments in muscle and non-muscle cells. Plays a central role, in association with the troponin complex, in the calcium dependent regulation of vertebrate striated muscle contraction. Smooth muscle contraction is regulated by interaction with caldesmon. In non-muscle cells is implicated in stabilizing cytoskeleton actin filaments. This is Tropomyosin alpha-1 chain (tpma) from Danio rerio (Zebrafish).